A 714-amino-acid chain; its full sequence is Centromere/kinetochore protein zw10 (714 aa).

It belongs to the ZW10 family.

It localises to the cytoplasm. The protein resides in the nucleus. Its subcellular location is the chromosome. The protein localises to the centromere. It is found in the kinetochore. Its function is as follows. Required for accurate chromosome segregation. The chain is Centromere/kinetochore protein zw10 (mit(1)15) from Drosophila grimshawi (Hawaiian fruit fly).